A 283-amino-acid polypeptide reads, in one-letter code: Phosphatidylserine decarboxylase proenzyme (283 aa).

Catalysis depends on charge relay system; for autoendoproteolytic cleavage activity residues Asp89, His146, and Ser249. The Schiff-base intermediate with substrate; via pyruvic acid; for decarboxylase activity role is filled by Ser249. At Ser249 the chain carries Pyruvic acid (Ser); by autocatalysis.

The protein belongs to the phosphatidylserine decarboxylase family. PSD-B subfamily. Prokaryotic type I sub-subfamily. As to quaternary structure, heterodimer of a large membrane-associated beta subunit and a small pyruvoyl-containing alpha subunit. Requires pyruvate as cofactor. Post-translationally, is synthesized initially as an inactive proenzyme. Formation of the active enzyme involves a self-maturation process in which the active site pyruvoyl group is generated from an internal serine residue via an autocatalytic post-translational modification. Two non-identical subunits are generated from the proenzyme in this reaction, and the pyruvate is formed at the N-terminus of the alpha chain, which is derived from the carboxyl end of the proenzyme. The autoendoproteolytic cleavage occurs by a canonical serine protease mechanism, in which the side chain hydroxyl group of the serine supplies its oxygen atom to form the C-terminus of the beta chain, while the remainder of the serine residue undergoes an oxidative deamination to produce ammonia and the pyruvoyl prosthetic group on the alpha chain. During this reaction, the Ser that is part of the protease active site of the proenzyme becomes the pyruvoyl prosthetic group, which constitutes an essential element of the active site of the mature decarboxylase.

The protein resides in the cell membrane. It catalyses the reaction a 1,2-diacyl-sn-glycero-3-phospho-L-serine + H(+) = a 1,2-diacyl-sn-glycero-3-phosphoethanolamine + CO2. It functions in the pathway phospholipid metabolism; phosphatidylethanolamine biosynthesis; phosphatidylethanolamine from CDP-diacylglycerol: step 2/2. Functionally, catalyzes the formation of phosphatidylethanolamine (PtdEtn) from phosphatidylserine (PtdSer). The chain is Phosphatidylserine decarboxylase proenzyme from Legionella pneumophila (strain Lens).